Reading from the N-terminus, the 459-residue chain is Alcohol acyl transferase 1 allele GSd (459 aa).

Residues H164 and N385 each act as proton acceptor in the active site.

It belongs to the plant acyltransferase family. Expressed at very low levels in the cortex and skin of ripe fruit.

Its function is as follows. Involved in the biosynthesis of volatile esters which confer ripe apple fruit flavor. Alcohol acyl transferase that can use a wide range of alcohols as substrate to produce esters. This Malus domestica (Apple) protein is Alcohol acyl transferase 1 allele GSd.